We begin with the raw amino-acid sequence, 388 residues long: 3-oxo-Delta(4,5)-steroid 5-beta-reductase (388 aa).

Residue Ser-2 is modified to N-acetylserine. NADP(+) contacts are provided by residues 35–37 (TGI), 63–64 (RR), 81–82 (DV), Thr-105, and Gln-143. Residues Lys-147 and Tyr-178 contribute to the active site. NADP(+) is bound by residues Tyr-178, Ile-205, and 212-214 (SLM).

This sequence belongs to the short-chain dehydrogenases/reductases (SDR) family. Highly divergent. Homodimer. In terms of tissue distribution, expressed in roots, stems, leaves, flowers, seeds and siliques. Expressed in the vascular bundles.

It catalyses the reaction 5beta-cholestan-3-one + NADP(+) = cholest-4-en-3-one + NADPH + H(+). It carries out the reaction 4,5beta-dihydrocortisone + NADP(+) = cortisone + NADPH + H(+). Involved in vascular strand development. Catalyzes the stereospecific conversion of progesterone to 5-beta-pregnane-3,20-dione. Can use progesterone, testosterone, 21-acetyl cortexone, 2-cyclohexenone, but-1-en-3-one, ethyl acrylate, ethylmethacrylate, cortisone and canarigenone as substrates, lower activity with 3-methyl-2-cyclohexenone and 3,5,5-trimethyl-2-cyclohexenone as substrate, and no activity with canarigenin, canarigenin digitoxoside and pregnenolone. May be involved in the formation of 5-beta phytoecdysteroids. The protein is 3-oxo-Delta(4,5)-steroid 5-beta-reductase (VEP1) of Arabidopsis thaliana (Mouse-ear cress).